The primary structure comprises 489 residues: N-succinylglutamate 5-semialdehyde dehydrogenase (489 aa).

Residue 221-226 coordinates NAD(+); sequence GSSGTG. Residues Glu-244 and Cys-278 contribute to the active site.

This sequence belongs to the aldehyde dehydrogenase family. AstD subfamily.

It carries out the reaction N-succinyl-L-glutamate 5-semialdehyde + NAD(+) + H2O = N-succinyl-L-glutamate + NADH + 2 H(+). The protein operates within amino-acid degradation; L-arginine degradation via AST pathway; L-glutamate and succinate from L-arginine: step 4/5. Catalyzes the NAD-dependent reduction of succinylglutamate semialdehyde into succinylglutamate. The chain is N-succinylglutamate 5-semialdehyde dehydrogenase from Sorangium cellulosum (strain So ce56) (Polyangium cellulosum (strain So ce56)).